The sequence spans 278 residues: Large ribosomal subunit protein uL2 (278 aa).

Disordered regions lie at residues 29–53 (PEKSLVRPLSKTGGRNSSGRITTRH) and 223–278 (GVAM…GKKR). Residues 255 to 268 (GRTRRPGKESDKLI) are compositionally biased toward basic and acidic residues. A compositionally biased stretch (basic residues) spans 269–278 (VRRRRTGKKR).

The protein belongs to the universal ribosomal protein uL2 family. As to quaternary structure, part of the 50S ribosomal subunit. Forms a bridge to the 30S subunit in the 70S ribosome.

In terms of biological role, one of the primary rRNA binding proteins. Required for association of the 30S and 50S subunits to form the 70S ribosome, for tRNA binding and peptide bond formation. It has been suggested to have peptidyltransferase activity; this is somewhat controversial. Makes several contacts with the 16S rRNA in the 70S ribosome. This is Large ribosomal subunit protein uL2 from Kineococcus radiotolerans (strain ATCC BAA-149 / DSM 14245 / SRS30216).